Here is a 922-residue protein sequence, read N- to C-terminus: DNA gyrase subunit A (922 aa).

Residues 34–534 enclose the Topo IIA-type catalytic domain; it reads LPDVRDGLKP…SSAEINIEDL (501 aa). Catalysis depends on Tyr-122, which acts as the O-(5'-phospho-DNA)-tyrosine intermediate. The GyrA-box motif lies at 561-567; it reads QRRGGRG. Disordered stretches follow at residues 715 to 763 and 899 to 922; these read MQPM…VRPM and IDGEVSEGTDTAPDAGSAAADPEE. Residues 723–743 show a composition bias toward acidic residues; that stretch reads DDVDGDDESVIDAGNDDDGSD.

This sequence belongs to the type II topoisomerase GyrA/ParC subunit family. As to quaternary structure, heterotetramer, composed of two GyrA and two GyrB chains. In the heterotetramer, GyrA contains the active site tyrosine that forms a transient covalent intermediate with DNA, while GyrB binds cofactors and catalyzes ATP hydrolysis.

Its subcellular location is the cytoplasm. It carries out the reaction ATP-dependent breakage, passage and rejoining of double-stranded DNA.. A type II topoisomerase that negatively supercoils closed circular double-stranded (ds) DNA in an ATP-dependent manner to modulate DNA topology and maintain chromosomes in an underwound state. Negative supercoiling favors strand separation, and DNA replication, transcription, recombination and repair, all of which involve strand separation. Also able to catalyze the interconversion of other topological isomers of dsDNA rings, including catenanes and knotted rings. Type II topoisomerases break and join 2 DNA strands simultaneously in an ATP-dependent manner. In Aeromonas salmonicida, this protein is DNA gyrase subunit A.